A 457-amino-acid chain; its full sequence is Bifunctional protein GlmU (457 aa).

The interval 1–230 (MPLSLPLHIV…AREVEGVNDL (230 aa)) is pyrophosphorylase. UDP-N-acetyl-alpha-D-glucosamine contacts are provided by residues 12–15 (LAAG), Lys26, Gln78, 83–84 (GT), 105–107 (YGD), Gly140, Glu155, Asn170, and Asn228. Asp107 is a Mg(2+) binding site. Asn228 is a binding site for Mg(2+). Residues 231–251 (WQLTQLERAWQIRAARALCLQ) are linker. Residues 252-457 (GARVADPARL…DSWQRPKKKT (206 aa)) form an N-acetyltransferase region. UDP-N-acetyl-alpha-D-glucosamine contacts are provided by Arg334 and Lys352. Catalysis depends on His364, which acts as the Proton acceptor. Residues Tyr367 and Asn378 each contribute to the UDP-N-acetyl-alpha-D-glucosamine site. Acetyl-CoA-binding positions include Ala381, 387–388 (NY), Ser406, Ala424, and Arg441.

It in the N-terminal section; belongs to the N-acetylglucosamine-1-phosphate uridyltransferase family. In the C-terminal section; belongs to the transferase hexapeptide repeat family. Homotrimer. Mg(2+) serves as cofactor.

Its subcellular location is the cytoplasm. The catalysed reaction is alpha-D-glucosamine 1-phosphate + acetyl-CoA = N-acetyl-alpha-D-glucosamine 1-phosphate + CoA + H(+). It carries out the reaction N-acetyl-alpha-D-glucosamine 1-phosphate + UTP + H(+) = UDP-N-acetyl-alpha-D-glucosamine + diphosphate. It functions in the pathway nucleotide-sugar biosynthesis; UDP-N-acetyl-alpha-D-glucosamine biosynthesis; N-acetyl-alpha-D-glucosamine 1-phosphate from alpha-D-glucosamine 6-phosphate (route II): step 2/2. It participates in nucleotide-sugar biosynthesis; UDP-N-acetyl-alpha-D-glucosamine biosynthesis; UDP-N-acetyl-alpha-D-glucosamine from N-acetyl-alpha-D-glucosamine 1-phosphate: step 1/1. The protein operates within bacterial outer membrane biogenesis; LPS lipid A biosynthesis. Functionally, catalyzes the last two sequential reactions in the de novo biosynthetic pathway for UDP-N-acetylglucosamine (UDP-GlcNAc). The C-terminal domain catalyzes the transfer of acetyl group from acetyl coenzyme A to glucosamine-1-phosphate (GlcN-1-P) to produce N-acetylglucosamine-1-phosphate (GlcNAc-1-P), which is converted into UDP-GlcNAc by the transfer of uridine 5-monophosphate (from uridine 5-triphosphate), a reaction catalyzed by the N-terminal domain. This Xylella fastidiosa (strain 9a5c) protein is Bifunctional protein GlmU.